The chain runs to 130 residues: Histone H2A type 2 (130 aa).

Positions 1 to 22 are disordered; that stretch reads MSGRGKQGGKTRAKSKTRSSRA. Ser2 carries the N-acetylserine modification. Ser2 bears the Phosphoserine mark. An N6-(2-hydroxyisobutyryl)lysine modification is found at Lys6. Lys6 is modified (N6-acetyllysine). Basic residues predominate over residues 7–19; the sequence is QGGKTRAKSKTRS. At Lys10 the chain carries N6-(2-hydroxyisobutyryl)lysine; alternate. Lys10 bears the N6-lactoyllysine; alternate mark. Lys10 bears the N6-succinyllysine mark. Glycyl lysine isopeptide (Lys-Gly) (interchain with G-Cter in ubiquitin) cross-links involve residues Lys14 and Lys16. Position 37 is an N6-(2-hydroxyisobutyryl)lysine; alternate (Lys37). N6-(2-hydroxyisobutyryl)lysine is present on Lys76. Lys96 is modified (N6-(2-hydroxyisobutyryl)lysine; alternate). Position 96 is an N6-succinyllysine (Lys96). Lys96 carries the post-translational modification N6-glutaryllysine; alternate. Position 105 is an N5-methylglutamine (Gln105). The residue at position 119 (Lys119) is an N6-(2-hydroxyisobutyryl)lysine; alternate. The residue at position 119 (Lys119) is an N6-glutaryllysine; alternate. A Glycyl lysine isopeptide (Lys-Gly) (interchain with G-Cter in ubiquitin) cross-link involves residue Lys120.

The protein belongs to the histone H2A family. The nucleosome is a histone octamer containing two molecules each of H2A, H2B, H3 and H4 assembled in one H3-H4 heterotetramer and two H2A-H2B heterodimers. The octamer wraps approximately 147 bp of DNA. Monoubiquitination of Lys-120 (H2AK119Ub) gives a specific tag for epigenetic transcriptional repression. Following DNA double-strand breaks (DSBs), it is ubiquitinated through 'Lys-63' linkage of ubiquitin moieties, leading to the recruitment of repair proteins to sites of DNA damage. H2AK119Ub and ionizing radiation-induced 'Lys-63'-linked ubiquitination are distinct events. Post-translationally, phosphorylation on Ser-2 is enhanced during mitosis. Phosphorylation on Ser-2 directly represses transcription. In terms of processing, glutamine methylation at Gln-105 (H2AQ104me) by FBL is specifically dedicated to polymerase I. It is present at 35S ribosomal DNA locus and impairs binding of the FACT complex.

Its subcellular location is the nucleus. The protein resides in the chromosome. Core component of nucleosome. Nucleosomes wrap and compact DNA into chromatin, limiting DNA accessibility to the cellular machineries which require DNA as a template. Histones thereby play a central role in transcription regulation, DNA repair, DNA replication and chromosomal stability. DNA accessibility is regulated via a complex set of post-translational modifications of histones, also called histone code, and nucleosome remodeling. In Xenopus laevis (African clawed frog), this protein is Histone H2A type 2.